Here is a 393-residue protein sequence, read N- to C-terminus: Squamosa promoter-binding-like protein 11 (393 aa).

The tract at residues 74-96 (QSTSINSSSPEAKRCKLASESSP) is disordered. The SBP-type zinc finger occupies 172-249 (VPRCQIDGCE…SHHNARRRKP (78 aa)). Zn(2+)-binding residues include cysteine 175, cysteine 180, cysteine 197, histidine 200, cysteine 216, cysteine 219, histidine 223, and cysteine 235. The Bipartite nuclear localization signal signature appears at 232 to 248 (KRSCRKRLSHHNARRRK).

Zn(2+) is required as a cofactor.

Its subcellular location is the nucleus. Its function is as follows. Trans-acting factor that binds specifically to the consensus nucleotide sequence 5'-TNCGTACAA-3'. The chain is Squamosa promoter-binding-like protein 11 (SPL11) from Arabidopsis thaliana (Mouse-ear cress).